The primary structure comprises 489 residues: NADH-quinone oxidoreductase subunit N (489 aa).

14 helical membrane-spanning segments follow: residues 15–35 (APLL…VFFI), 44–64 (GYLA…LWGV), 78–98 (FALT…TMSL), 106–126 (IEQG…ILLA), 131–151 (LIVL…LTGF), 166–186 (LVLG…IFGA), 209–229 (LTLL…KVAL), 244–264 (PTPV…AALV), 278–298 (WLPV…LGAV), 306–326 (MLAY…MVAG), 333–353 (AFLF…AVLI), 378–398 (LAVA…MAGF), 412–432 (GLPW…FFYL), and 459–479 (IALA…VFAL).

The protein belongs to the complex I subunit 2 family. NDH-1 is composed of 14 different subunits. Subunits NuoA, H, J, K, L, M, N constitute the membrane sector of the complex.

It is found in the cell membrane. The enzyme catalyses a quinone + NADH + 5 H(+)(in) = a quinol + NAD(+) + 4 H(+)(out). NDH-1 shuttles electrons from NADH, via FMN and iron-sulfur (Fe-S) centers, to quinones in the respiratory chain. The immediate electron acceptor for the enzyme in this species is believed to be ubiquinone. Couples the redox reaction to proton translocation (for every two electrons transferred, four hydrogen ions are translocated across the cytoplasmic membrane), and thus conserves the redox energy in a proton gradient. The chain is NADH-quinone oxidoreductase subunit N from Chloroflexus aggregans (strain MD-66 / DSM 9485).